The chain runs to 161 residues: Lipoprotein signal peptidase (161 aa).

A run of 3 helical transmembrane segments spans residues Trp-9–Glu-29, Trp-64–Leu-84, and Met-96–Ala-113. Residues Asp-120 and Asp-138 contribute to the active site. The chain crosses the membrane as a helical span at residues Val-133–Phe-153.

Belongs to the peptidase A8 family.

It localises to the cell inner membrane. The enzyme catalyses Release of signal peptides from bacterial membrane prolipoproteins. Hydrolyzes -Xaa-Yaa-Zaa-|-(S,diacylglyceryl)Cys-, in which Xaa is hydrophobic (preferably Leu), and Yaa (Ala or Ser) and Zaa (Gly or Ala) have small, neutral side chains.. It participates in protein modification; lipoprotein biosynthesis (signal peptide cleavage). Its function is as follows. This protein specifically catalyzes the removal of signal peptides from prolipoproteins. The chain is Lipoprotein signal peptidase from Haemophilus ducreyi (strain 35000HP / ATCC 700724).